The chain runs to 280 residues: Ribosomal protein L11 methyltransferase (280 aa).

4 residues coordinate S-adenosyl-L-methionine: T130, G151, D172, and N213.

This sequence belongs to the methyltransferase superfamily. PrmA family.

The protein localises to the cytoplasm. It catalyses the reaction L-lysyl-[protein] + 3 S-adenosyl-L-methionine = N(6),N(6),N(6)-trimethyl-L-lysyl-[protein] + 3 S-adenosyl-L-homocysteine + 3 H(+). Methylates ribosomal protein L11. The chain is Ribosomal protein L11 methyltransferase from Nitratiruptor sp. (strain SB155-2).